A 401-amino-acid chain; its full sequence is CinA-like protein (401 aa).

This sequence belongs to the CinA family.

The protein is CinA-like protein of Thermosipho melanesiensis (strain DSM 12029 / CIP 104789 / BI429).